A 614-amino-acid chain; its full sequence is Phosphomethylpyrimidine synthase (614 aa).

Substrate-binding positions include asparagine 226, methionine 255, tyrosine 284, histidine 320, 340–342 (SRG), 381–384 (DGLR), and glutamate 420. Histidine 424 is a Zn(2+) binding site. Substrate is bound at residue tyrosine 447. Residue histidine 488 coordinates Zn(2+). Cysteine 568, cysteine 571, and cysteine 576 together coordinate [4Fe-4S] cluster.

The protein belongs to the ThiC family. In terms of assembly, homodimer. It depends on [4Fe-4S] cluster as a cofactor.

It carries out the reaction 5-amino-1-(5-phospho-beta-D-ribosyl)imidazole + S-adenosyl-L-methionine = 4-amino-2-methyl-5-(phosphooxymethyl)pyrimidine + CO + 5'-deoxyadenosine + formate + L-methionine + 3 H(+). The protein operates within cofactor biosynthesis; thiamine diphosphate biosynthesis. Its function is as follows. Catalyzes the synthesis of the hydroxymethylpyrimidine phosphate (HMP-P) moiety of thiamine from aminoimidazole ribotide (AIR) in a radical S-adenosyl-L-methionine (SAM)-dependent reaction. The chain is Phosphomethylpyrimidine synthase from Acidovorax sp. (strain JS42).